The chain runs to 201 residues: MKTSAQQLLSLLLLPLSAIAAPTGEIEARACSTVTVIFARGTTETPTLGTVIGPQFLAALKSSFGGSVTMNGVPYAADVPGFLKGGDPTGSKVMANMVSSALSSCPNTKLVISGYSQGGQLVHNAAKQLPAATTAKIAAAVIFGDPDNGSPVQGVPAAKTKIICHAGDNICQHGSMILMPHLTYGMDATAAAAFVKQVAGS.

The N-terminal stretch at 1–20 (MKTSAQQLLSLLLLPLSAIA) is a signal peptide. A disulfide bridge connects residues Cys-31 and Cys-105. The active-site Nucleophile is Ser-116. Cys-164 and Cys-171 are disulfide-bonded. Residue Asp-168 is part of the active site. Residue His-181 is the Proton donor/acceptor of the active site.

Belongs to the cutinase family. Post-translationally, the 2 disulfide bonds play a critical role in holding the catalytic residues in juxta-position; reduction of the disulfide bridges results in the complete inactivation of the enzyme.

It localises to the secreted. The catalysed reaction is cutin + H2O = cutin monomers.. In terms of biological role, catalyzes the hydrolysis of complex carboxylic polyesters found in the cell wall of plants. Degrades cutin, a macromolecule that forms the structure of the plant cuticle. Allows pathogenic fungi to penetrate through the cuticular barrier into the host plant during the initial stage of fungal infection. This chain is Cutinase (CUT1), found in Monilinia fructicola (Brown rot fungus).